Reading from the N-terminus, the 376-residue chain is Putative glutamate--cysteine ligase 2 (376 aa).

Belongs to the glutamate--cysteine ligase type 2 family. YbdK subfamily.

It catalyses the reaction L-cysteine + L-glutamate + ATP = gamma-L-glutamyl-L-cysteine + ADP + phosphate + H(+). Functionally, ATP-dependent carboxylate-amine ligase which exhibits weak glutamate--cysteine ligase activity. The chain is Putative glutamate--cysteine ligase 2 from Mycobacterium bovis (strain ATCC BAA-935 / AF2122/97).